The sequence spans 177 residues: Large ribosomal subunit protein uL6 (177 aa).

It belongs to the universal ribosomal protein uL6 family. Part of the 50S ribosomal subunit.

This protein binds to the 23S rRNA, and is important in its secondary structure. It is located near the subunit interface in the base of the L7/L12 stalk, and near the tRNA binding site of the peptidyltransferase center. The polypeptide is Large ribosomal subunit protein uL6 (Sinorhizobium medicae (strain WSM419) (Ensifer medicae)).